The primary structure comprises 469 residues: Probable periplasmic serine endoprotease DegP-like (469 aa).

Positions 1 to 25 (MKVCQKYTAVLLVWLSAVVSMRAGA) are cleaved as a signal peptide. Catalysis depends on charge relay system residues H108, D138, and S211. Residues 209–211 (GNS) and 266–270 (LGVLI) contribute to the substrate site. PDZ domains lie at 255–346 (LKDT…VRRG) and 352–457 (AVEI…IRQG).

The protein belongs to the peptidase S1C family.

Its subcellular location is the periplasm. It carries out the reaction Acts on substrates that are at least partially unfolded. The cleavage site P1 residue is normally between a pair of hydrophobic residues, such as Val-|-Val.. In terms of biological role, might be efficient in the degradation of transiently denatured and unfolded proteins which accumulate in the periplasm following stress conditions. The sequence is that of Probable periplasmic serine endoprotease DegP-like (mucD) from Hahella chejuensis (strain KCTC 2396).